The sequence spans 394 residues: Small RNA 2'-O-methyltransferase (394 aa).

Positions 78 and 114 each coordinate S-adenosyl-L-methionine. Mg(2+) is bound by residues glutamate 132, glutamate 135, histidine 136, and histidine 181.

This sequence belongs to the methyltransferase superfamily. HEN1 family. Requires Mg(2+) as cofactor.

It localises to the cytoplasm. It carries out the reaction small RNA 3'-end nucleotide + S-adenosyl-L-methionine = small RNA 3'-end 2'-O-methylnucleotide + S-adenosyl-L-homocysteine + H(+). In terms of biological role, methyltransferase that adds a 2'-O-methyl group at the 3'-end of piRNAs, a class of 24 to 30 nucleotide RNAs that are generated by a Dicer-independent mechanism and are primarily derived from transposons and other repeated sequence elements. This probably protects the 3'-end of piRNAs from uridylation activity and subsequent degradation. Stabilization of piRNAs is essential for gametogenesis. This Rattus norvegicus (Rat) protein is Small RNA 2'-O-methyltransferase (Henmt1).